Consider the following 370-residue polypeptide: 4-hydroxy-3-methylbut-2-en-1-yl diphosphate synthase (flavodoxin) (370 aa).

[4Fe-4S] cluster contacts are provided by Cys-265, Cys-268, Cys-300, and Glu-307.

It belongs to the IspG family. Requires [4Fe-4S] cluster as cofactor.

The enzyme catalyses (2E)-4-hydroxy-3-methylbut-2-enyl diphosphate + oxidized [flavodoxin] + H2O + 2 H(+) = 2-C-methyl-D-erythritol 2,4-cyclic diphosphate + reduced [flavodoxin]. It participates in isoprenoid biosynthesis; isopentenyl diphosphate biosynthesis via DXP pathway; isopentenyl diphosphate from 1-deoxy-D-xylulose 5-phosphate: step 5/6. Converts 2C-methyl-D-erythritol 2,4-cyclodiphosphate (ME-2,4cPP) into 1-hydroxy-2-methyl-2-(E)-butenyl 4-diphosphate. The sequence is that of 4-hydroxy-3-methylbut-2-en-1-yl diphosphate synthase (flavodoxin) from Symbiobacterium thermophilum (strain DSM 24528 / JCM 14929 / IAM 14863 / T).